The chain runs to 367 residues: Forkhead box protein I1-B (367 aa).

Disordered regions lie at residues 1 to 21 (MNPVQQPAQHRSPASLLHLPH) and 213 to 274 (DNGN…PPTV). The fork-head DNA-binding region spans 128-222 (RPPYSYSALI…DNGNFRRKRK (95 aa)). Residues 233 to 246 (AKRDEDHLNPKGKE) show a composition bias toward basic and acidic residues. A compositionally biased stretch (polar residues) spans 252–274 (TPSSSPEVLSPTGHSKSPSPPTV).

As to expression, initially localized to the animal hemisphere (the presumptive ectoderm) of early-mid blastula embryos. Becomes restricted to head placodes, excluding the otic placodes, by the tailbud stages.

The protein resides in the nucleus. Transcription factor. Essential for ventral specification of the early cephalic (head) ectoderm during gastrulation, playing a role in the 'non-neural' versus 'neural' cell fate choice. Binds to DNA via the target sequence 5'-[AG]TAAA[CT]A-3', with 5'-ATAAACA-3' being the preferred binding site. In Xenopus laevis (African clawed frog), this protein is Forkhead box protein I1-B (foxi1-b).